A 206-amino-acid chain; its full sequence is Proteasome subunit beta 2 (206 aa).

Residues Met-1–Gly-10 constitute a propeptide, removed in mature form; by autocatalysis. The Nucleophile role is filled by Thr-11.

The protein belongs to the peptidase T1B family. In terms of assembly, the 20S proteasome core is composed of 14 alpha and 14 beta subunits that assemble into four stacked heptameric rings, resulting in a barrel-shaped structure. The two inner rings, each composed of seven catalytic beta subunits, are sandwiched by two outer rings, each composed of seven alpha subunits. The catalytic chamber with the active sites is on the inside of the barrel. Has a gated structure, the ends of the cylinder being occluded by the N-termini of the alpha-subunits. Is capped at one or both ends by the proteasome regulatory ATPase, PAN.

The protein resides in the cytoplasm. The enzyme catalyses Cleavage of peptide bonds with very broad specificity.. Its activity is regulated as follows. The formation of the proteasomal ATPase PAN-20S proteasome complex, via the docking of the C-termini of PAN into the intersubunit pockets in the alpha-rings, triggers opening of the gate for substrate entry. Interconversion between the open-gate and close-gate conformations leads to a dynamic regulation of the 20S proteasome proteolysis activity. In terms of biological role, component of the proteasome core, a large protease complex with broad specificity involved in protein degradation. In Pyrococcus furiosus (strain ATCC 43587 / DSM 3638 / JCM 8422 / Vc1), this protein is Proteasome subunit beta 2.